We begin with the raw amino-acid sequence, 307 residues long: Nicotinamide/nicotinic acid mononucleotide adenylyltransferase 2 (307 aa).

The NAD(+) site is built by serine 16 and phenylalanine 17. ATP is bound at residue histidine 24. NAD(+) is bound by residues tryptophan 92 and threonine 95. Residues cysteine 164 and cysteine 165 are each lipidated (S-palmitoyl cysteine). 5 residues coordinate NAD(+): glycine 200, aspartate 202, leucine 212, tryptophan 213, and arginine 232. 271–274 (TKSR) lines the ATP pocket.

This sequence belongs to the eukaryotic NMN adenylyltransferase family. In terms of assembly, monomer. Requires Mg(2+) as cofactor. In terms of processing, degraded in response to injured neurite. Degradation is caused by polyubiquitination by MYCBP2 after recognition by FBXO45. Post-translationally, palmitoylated; palmitoylation is required for membrane association.

The protein localises to the golgi apparatus membrane. Its subcellular location is the cytoplasmic vesicle membrane. The protein resides in the cytoplasm. It is found in the cell projection. It localises to the axon. It carries out the reaction beta-nicotinamide D-ribonucleotide + ATP + H(+) = diphosphate + NAD(+). The catalysed reaction is nicotinate beta-D-ribonucleotide + ATP + H(+) = deamido-NAD(+) + diphosphate. It functions in the pathway cofactor biosynthesis; NAD(+) biosynthesis; NAD(+) from nicotinamide D-ribonucleotide: step 1/1. It participates in cofactor biosynthesis; NAD(+) biosynthesis; deamido-NAD(+) from nicotinate D-ribonucleotide: step 1/1. With respect to regulation, inhibited by P1-(adenosine-5')-P3-(nicotinamide-riboside-5')-triphosphate (Np3AD) and P1-(adenosine-5')-P4-(nicotinamide-riboside-5')-tetraphosphate (Np4AD). Its function is as follows. Nicotinamide/nicotinate-nucleotide adenylyltransferase that acts as an axon maintenance factor. Axon survival factor required for the maintenance of healthy axons: acts by delaying Wallerian axon degeneration, an evolutionarily conserved process that drives the loss of damaged axons. Catalyzes the formation of NAD(+) from nicotinamide mononucleotide (NMN) and ATP. Can also use the deamidated form; nicotinic acid mononucleotide (NaMN) as substrate but with a lower efficiency. Cannot use triazofurin monophosphate (TrMP) as substrate. Also catalyzes the reverse reaction, i.e. the pyrophosphorolytic cleavage of NAD(+). For the pyrophosphorolytic activity prefers NAD(+), NADH and NaAD as substrates and degrades nicotinic acid adenine dinucleotide phosphate (NHD) less effectively. Fails to cleave phosphorylated dinucleotides NADP(+), NADPH and NaADP(+). Also acts as an activator of ADP-ribosylation by supporting the catalytic activity of PARP16 and promoting mono-ADP-ribosylation of ribosomes by PARP16. May be involved in the maintenance of axonal integrity. The sequence is that of Nicotinamide/nicotinic acid mononucleotide adenylyltransferase 2 (NMNAT2) from Pongo abelii (Sumatran orangutan).